We begin with the raw amino-acid sequence, 101 residues long: ATP-dependent Clp protease adapter protein ClpS (101 aa).

This sequence belongs to the ClpS family. Binds to the N-terminal domain of the chaperone ClpA.

Involved in the modulation of the specificity of the ClpAP-mediated ATP-dependent protein degradation. The sequence is that of ATP-dependent Clp protease adapter protein ClpS from Corynebacterium efficiens (strain DSM 44549 / YS-314 / AJ 12310 / JCM 11189 / NBRC 100395).